We begin with the raw amino-acid sequence, 521 residues long: Organic cation/carnitine transporter 6 (521 aa).

Topologically, residues 1–37 are cytoplasmic; sequence MADPISEPLLSHLTDDSGVNEKTRLEALTFDKIVEQS. Residues 38–58 form a helical membrane-spanning segment; the sequence is LSDFGFWQFFQISLVGLALLF. Residues 59-123 are Extracellular-facing; sequence DAQQIFITVY…GLECSSSLLR (65 aa). An N-linked (GlcNAc...) asparagine glycan is attached at asparagine 79. A helical membrane pass occupies residues 124 to 144; that stretch reads GMPSSAFYIGAIVGGFFLALI. Residues 145-154 are Cytoplasmic-facing; the sequence is PDDSLGRKKL. The chain crosses the membrane as a helical span at residues 155 to 177; that stretch reads VLFSTFAMSITSISVIFSTNVWI. Over 178-182 the chain is Extracellular; the sequence is YTFLK. The helical transmembrane segment at 183-200 threads the bilayer; it reads FIIGFSRSQTWSYALVLI. ATP is bound at residue 200-207; it reads ISERVSTR. Topologically, residues 201-213 are cytoplasmic; the sequence is SERVSTRWRPRAT. The helical transmembrane segment at 214–234 threads the bilayer; it reads MIPFTLFVLGFMSLSGIAFLA. Residues 235 to 241 are Extracellular-facing; it reads QDSSWRY. A helical membrane pass occupies residues 242-262; that stretch reads LYLYTSVPAVFYCIFLYLFAL. Residues 263–326 lie on the Cytoplasmic side of the membrane; it reads ESPRWLHMQG…FFFRKWAFRR (64 aa). A helical membrane pass occupies residues 327 to 347; sequence ILVVMIIMFGLGISYYGVPLA. Residues 348–356 are Extracellular-facing; that stretch reads ARDIDVNIY. A helical transmembrane segment spans residues 357–377; the sequence is LSETLNALVELPTFVITPILL. The Cytoplasmic portion of the chain corresponds to 378–385; sequence ERFNRRSS. The helical transmembrane segment at 386-406 threads the bilayer; that stretch reads VLVNTLLGGASGVLCFVLSIL. At 407 to 412 the chain is on the extracellular side; it reads GKTEIA. The helical transmembrane segment at 413-433 threads the bilayer; that stretch reads FAFELGTFFCARIGFNLMAVF. Residues 434-447 are Cytoplasmic-facing; the sequence is MVEMFPTCVRSSAT. A helical transmembrane segment spans residues 448 to 468; it reads MMFRQALVVGGACCPLIASIG. At 469 to 473 the chain is on the extracellular side; sequence RYIPS. The chain crosses the membrane as a helical span at residues 474 to 494; it reads VSFAIFGIAMSGLGMFVLILP. Over 495-521 the chain is Cytoplasmic; it reads ETKGLSLCDSMEEQEKRDQAVNTSHVC.

Belongs to the major facilitator (TC 2.A.1) superfamily. Organic cation transporter (TC 2.A.1.19) family. Expressed in roots and stems. In the stem of secondary inflorescences, localized to the phloem. Also present in flowers, specifically in the stamen, in the filaments and the connective, and restricted to major veins in leaves.

It is found in the vacuole membrane. Functionally, high affinity carnitine transporter involved in the active cellular uptake of carnitine. Also transports organic cations. In Arabidopsis thaliana (Mouse-ear cress), this protein is Organic cation/carnitine transporter 6 (OCT6).